The following is a 405-amino-acid chain: Formate-dependent phosphoribosylglycinamide formyltransferase (405 aa).

Residues 22–23 and glutamate 82 contribute to the N(1)-(5-phospho-beta-D-ribosyl)glycinamide site; that span reads EL. ATP contacts are provided by residues arginine 115, lysine 162, 167 to 172, 202 to 205, and glutamate 210; these read SSGKGQ and EGFI. In terms of domain architecture, ATP-grasp spans 120–320; it reads RLAAETLGLA…EFELHARAIL (201 aa). Glutamate 279 and glutamate 291 together coordinate Mg(2+). N(1)-(5-phospho-beta-D-ribosyl)glycinamide is bound by residues aspartate 298, lysine 367, and 374–375; that span reads RR.

It belongs to the PurK/PurT family. Homodimer.

It catalyses the reaction N(1)-(5-phospho-beta-D-ribosyl)glycinamide + formate + ATP = N(2)-formyl-N(1)-(5-phospho-beta-D-ribosyl)glycinamide + ADP + phosphate + H(+). It functions in the pathway purine metabolism; IMP biosynthesis via de novo pathway; N(2)-formyl-N(1)-(5-phospho-D-ribosyl)glycinamide from N(1)-(5-phospho-D-ribosyl)glycinamide (formate route): step 1/1. In terms of biological role, involved in the de novo purine biosynthesis. Catalyzes the transfer of formate to 5-phospho-ribosyl-glycinamide (GAR), producing 5-phospho-ribosyl-N-formylglycinamide (FGAR). Formate is provided by PurU via hydrolysis of 10-formyl-tetrahydrofolate. The sequence is that of Formate-dependent phosphoribosylglycinamide formyltransferase from Delftia acidovorans (strain DSM 14801 / SPH-1).